A 309-amino-acid chain; its full sequence is Homoserine kinase (309 aa).

Residue 95-105 (PQSRGLGSSAA) participates in ATP binding.

The protein belongs to the GHMP kinase family. Homoserine kinase subfamily.

It localises to the cytoplasm. It catalyses the reaction L-homoserine + ATP = O-phospho-L-homoserine + ADP + H(+). The protein operates within amino-acid biosynthesis; L-threonine biosynthesis; L-threonine from L-aspartate: step 4/5. In terms of biological role, catalyzes the ATP-dependent phosphorylation of L-homoserine to L-homoserine phosphate. This is Homoserine kinase from Corynebacterium glutamicum (strain R).